The primary structure comprises 240 residues: Ribonuclease 3 (240 aa).

One can recognise an RNase III domain in the interval 9-141 (VEEFQKKTGI…LLAAIYLDQG (133 aa)). Glutamate 54 is a binding site for Mg(2+). Residue aspartate 58 is part of the active site. 2 residues coordinate Mg(2+): aspartate 127 and glutamate 130. The active site involves glutamate 130. In terms of domain architecture, DRBM spans 168–237 (DYKTALQEIV…ARIAYEKLLK (70 aa)).

Belongs to the ribonuclease III family. Homodimer. It depends on Mg(2+) as a cofactor.

The protein resides in the cytoplasm. The catalysed reaction is Endonucleolytic cleavage to 5'-phosphomonoester.. Digests double-stranded RNA. Involved in the processing of primary rRNA transcript to yield the immediate precursors to the large and small rRNAs (23S and 16S). Processes some mRNAs, and tRNAs when they are encoded in the rRNA operon. Processes pre-crRNA and tracrRNA of type II CRISPR loci if present in the organism. The chain is Ribonuclease 3 from Thermotoga sp. (strain RQ2).